Reading from the N-terminus, the 291-residue chain is S-adenosylmethionine uptake transporter (291 aa).

The next 10 helical transmembrane spans lie at 4 to 24 (ALKTYSIGIGWFLLSLVSSSA), 41 to 61 (VAFFRFFFSSIVLLPFVVYYG), 74 to 91 (ILRGLLLFFGMTSWTYGL), 98 to 118 (TATVISFSIPLFTLILAVFFL), 121 to 141 (NIIWQRWVVTIVGFVGLVITL), 148 to 168 (FNPEMLYFVLAAISFAMLDII), 178 to 198 (MISMLFYSAIVTAVVSIPAAA), 206 to 226 (LFELALLFILGSSGSLILFLL), 237 to 257 (ATAPYRYLELVISAIAAYFIF), and 260 to 280 (FPDKSTLHGAVIIIPATLFII). 2 EamA domains span residues 21 to 141 (SSSA…VITL) and 160 to 280 (ISFA…LFII).

The protein belongs to the drug/metabolite transporter (DMT) superfamily. 10 TMS drug/metabolite exporter (DME) (TC 2.A.7.3) family.

Its subcellular location is the cell inner membrane. Its function is as follows. Transports S-adenosylmethionine. The polypeptide is S-adenosylmethionine uptake transporter (sam) (Rickettsia bellii (strain RML369-C)).